The chain runs to 504 residues: ATP synthase subunit alpha (504 aa).

ATP is bound at residue 171 to 178 (GDRQTGKT).

It belongs to the ATPase alpha/beta chains family. As to quaternary structure, F-type ATPases have 2 components, CF(1) - the catalytic core - and CF(0) - the membrane proton channel. CF(1) has five subunits: alpha(3), beta(3), gamma(1), delta(1), epsilon(1). CF(0) has three main subunits: a(1), b(2) and c(9-12). The alpha and beta chains form an alternating ring which encloses part of the gamma chain. CF(1) is attached to CF(0) by a central stalk formed by the gamma and epsilon chains, while a peripheral stalk is formed by the delta and b chains.

It is found in the cell inner membrane. The enzyme catalyses ATP + H2O + 4 H(+)(in) = ADP + phosphate + 5 H(+)(out). Its function is as follows. Produces ATP from ADP in the presence of a proton gradient across the membrane. The alpha chain is a regulatory subunit. In Helicobacter hepaticus (strain ATCC 51449 / 3B1), this protein is ATP synthase subunit alpha.